The sequence spans 742 residues: Phosphoribosylformylglycinamidine synthase subunit PurL (742 aa).

Histidine 54 is a catalytic residue. Residues tyrosine 57 and lysine 96 each coordinate ATP. Residue glutamate 98 participates in Mg(2+) binding. Substrate contacts are provided by residues 99–102 (SHNH) and arginine 121. The active-site Proton acceptor is histidine 100. Aspartate 122 is a Mg(2+) binding site. Glycine 225 and glutamine 245 together coordinate substrate. Position 273 (aspartate 273) interacts with Mg(2+). 317-319 (ESQ) is a substrate binding site. Position 537 (glycine 537) interacts with ATP. Residue asparagine 538 coordinates Mg(2+). Serine 540 contributes to the substrate binding site.

This sequence belongs to the FGAMS family. As to quaternary structure, monomer. Part of the FGAM synthase complex composed of 1 PurL, 1 PurQ and 2 PurS subunits.

It localises to the cytoplasm. It catalyses the reaction N(2)-formyl-N(1)-(5-phospho-beta-D-ribosyl)glycinamide + L-glutamine + ATP + H2O = 2-formamido-N(1)-(5-O-phospho-beta-D-ribosyl)acetamidine + L-glutamate + ADP + phosphate + H(+). The catalysed reaction is L-glutamine + H2O = L-glutamate + NH4(+). It participates in purine metabolism; IMP biosynthesis via de novo pathway; 5-amino-1-(5-phospho-D-ribosyl)imidazole from N(2)-formyl-N(1)-(5-phospho-D-ribosyl)glycinamide: step 1/2. Functionally, part of the phosphoribosylformylglycinamidine synthase complex involved in the purines biosynthetic pathway. Catalyzes the ATP-dependent conversion of formylglycinamide ribonucleotide (FGAR) and glutamine to yield formylglycinamidine ribonucleotide (FGAM) and glutamate. The FGAM synthase complex is composed of three subunits. PurQ produces an ammonia molecule by converting glutamine to glutamate. PurL transfers the ammonia molecule to FGAR to form FGAM in an ATP-dependent manner. PurS interacts with PurQ and PurL and is thought to assist in the transfer of the ammonia molecule from PurQ to PurL. The polypeptide is Phosphoribosylformylglycinamidine synthase subunit PurL (Bacillus subtilis (strain 168)).